A 240-amino-acid polypeptide reads, in one-letter code: Sugar fermentation stimulation protein homolog (240 aa).

The protein belongs to the SfsA family.

The polypeptide is Sugar fermentation stimulation protein homolog (Saccharolobus islandicus (strain L.S.2.15 / Lassen #1) (Sulfolobus islandicus)).